A 198-amino-acid chain; its full sequence is Twist-related protein 1 (198 aa).

The span at 1–18 (MMQDVSSSPVSPADDSLS) shows a compositional bias: low complexity. The interval 1-101 (MMQDVSSSPV…GGGSPQSYEE (101 aa)) is disordered. Basic residues predominate over residues 34-43 (RGGRKRRSSR). 2 stretches are compositionally biased toward gly residues: residues 46–64 (AGGG…GGDE) and 79–95 (GCGG…GGGS). In terms of domain architecture, bHLH spans 104–155 (TQRVMANVRERQRTQSLNEAFAALRKIIPTLPSDKLSKIQTLKLAARYIDFL). Positions 157–187 (QVLQSDELDSKMASCSYVAHERLSYAFSVWR) are sufficient for transactivation activity.

In terms of assembly, efficient DNA binding requires dimerization with another bHLH protein. Homodimer or heterodimer with E proteins such as TCF3. ID1 binds preferentially to TCF3 but does not interact efficiently with TWIST1 so ID1 levels control the amount of TCF3 available to dimerize with TWIST and thus determine the type of dimer formed.

The protein resides in the nucleus. Acts as a transcriptional regulator. Inhibits myogenesis by sequestrating E proteins, inhibiting trans-activation by MEF2, and inhibiting DNA-binding by MYOD1 through physical interaction. This interaction probably involves the basic domains of both proteins. Also represses expression of pro-inflammatory cytokines such as TNFA and IL1B. Regulates cranial suture patterning and fusion. Activates transcription as a heterodimer with E proteins. Regulates gene expression differentially, depending on dimer composition. Homodimers induce expression of FGFR2 and POSTN while heterodimers repress FGFR2 and POSTN expression and induce THBS1 expression. Heterodimerization is also required for osteoblast differentiation. Represses the activity of the circadian transcriptional activator: NPAS2-BMAL1 heterodimer. The protein is Twist-related protein 1 (TWIST1) of Eulemur fulvus fulvus (Brown lemur).